The chain runs to 81 residues: Sulfur carrier protein TusA (81 aa).

The active-site Cysteine persulfide intermediate is the Cys-19.

Belongs to the sulfur carrier protein TusA family.

The protein localises to the cytoplasm. In terms of biological role, sulfur carrier protein which probably makes part of a sulfur-relay system. The protein is Sulfur carrier protein TusA of Aeromonas salmonicida (strain A449).